A 559-amino-acid polypeptide reads, in one-letter code: DNA primase (559 aa).

A CHC2-type zinc finger spans residues 37 to 61 (CPFHEERSASFSVNQVKGFYYCFGC). The Toprim domain maps to 246–327 (KQVIVTEGYL…KGGVILFENN (82 aa)). Mg(2+) is bound by residues E252, D296, and D298.

Belongs to the DnaG primase family. As to quaternary structure, monomer. Interacts with DnaB. Zn(2+) is required as a cofactor. The cofactor is Mg(2+).

The enzyme catalyses ssDNA + n NTP = ssDNA/pppN(pN)n-1 hybrid + (n-1) diphosphate.. Its function is as follows. RNA polymerase that catalyzes the synthesis of short RNA molecules used as primers for DNA polymerase during DNA replication. The sequence is that of DNA primase from Helicobacter pylori (strain J99 / ATCC 700824) (Campylobacter pylori J99).